The primary structure comprises 213 residues: ATP phosphoribosyltransferase (213 aa).

The protein belongs to the ATP phosphoribosyltransferase family. Short subfamily. As to quaternary structure, heteromultimer composed of HisG and HisZ subunits.

It localises to the cytoplasm. It carries out the reaction 1-(5-phospho-beta-D-ribosyl)-ATP + diphosphate = 5-phospho-alpha-D-ribose 1-diphosphate + ATP. It participates in amino-acid biosynthesis; L-histidine biosynthesis; L-histidine from 5-phospho-alpha-D-ribose 1-diphosphate: step 1/9. Its function is as follows. Catalyzes the condensation of ATP and 5-phosphoribose 1-diphosphate to form N'-(5'-phosphoribosyl)-ATP (PR-ATP). Has a crucial role in the pathway because the rate of histidine biosynthesis seems to be controlled primarily by regulation of HisG enzymatic activity. The protein is ATP phosphoribosyltransferase of Teredinibacter turnerae (strain ATCC 39867 / T7901).